The following is a 446-amino-acid chain: Na(+)/H(+) antiporter NhaA (446 aa).

11 consecutive transmembrane segments (helical) span residues 23-43 (GGML…SPWG), 73-93 (LMTF…GLEI), 109-129 (LLPI…YYFM), 138-158 (GLAI…SLFG), 167-187 (VFLT…IALF), 193-213 (SVNY…GNFF), 219-239 (WFYI…GIHA), 314-334 (MVNY…SLTA), 348-368 (VLAG…WLVI), 381-401 (WVNL…SLFI), and 419-439 (GVIL…QFAL).

It belongs to the NhaA Na(+)/H(+) (TC 2.A.33) antiporter family.

Its subcellular location is the cell inner membrane. The enzyme catalyses Na(+)(in) + 2 H(+)(out) = Na(+)(out) + 2 H(+)(in). Na(+)/H(+) antiporter that extrudes sodium in exchange for external protons. This chain is Na(+)/H(+) antiporter NhaA, found in Phocaeicola vulgatus (strain ATCC 8482 / DSM 1447 / JCM 5826 / CCUG 4940 / NBRC 14291 / NCTC 11154) (Bacteroides vulgatus).